We begin with the raw amino-acid sequence, 356 residues long: Butyrate kinase (356 aa).

Belongs to the acetokinase family.

The protein localises to the cytoplasm. It carries out the reaction butanoate + ATP = butanoyl phosphate + ADP. The protein operates within lipid metabolism; butanoate metabolism. Its function is as follows. Catalyzes the conversion of butyryl-CoA through butyryl phosphate to butyrate. This is Butyrate kinase (buk) from Clostridium perfringens (strain ATCC 13124 / DSM 756 / JCM 1290 / NCIMB 6125 / NCTC 8237 / Type A).